We begin with the raw amino-acid sequence, 811 residues long: LPS-assembly protein LptD (811 aa).

The first 17 residues, 1–17, serve as a signal peptide directing secretion; sequence MTEPNRARKTRQRTAFA. Residues 1-22 are disordered; that stretch reads MTEPNRARKTRQRTAFAAPDQR.

It belongs to the LptD family. In terms of assembly, component of the lipopolysaccharide transport and assembly complex. Interacts with LptE and LptA.

It is found in the cell outer membrane. Functionally, together with LptE, is involved in the assembly of lipopolysaccharide (LPS) at the surface of the outer membrane. The protein is LPS-assembly protein LptD of Ralstonia nicotianae (strain ATCC BAA-1114 / GMI1000) (Ralstonia solanacearum).